The primary structure comprises 37 residues: Large ribosomal subunit protein bL36 (37 aa).

Belongs to the bacterial ribosomal protein bL36 family.

This chain is Large ribosomal subunit protein bL36, found in Mesomycoplasma hyopneumoniae (strain 7448) (Mycoplasma hyopneumoniae).